Here is a 1065-residue protein sequence, read N- to C-terminus: Presequence protease, mitochondrial (1065 aa).

The N-terminal 42 residues, 1–42, are a transit peptide targeting the mitochondrion; it reads MLRSFSGAGKCKCRIPVSRQPVCGRSLRISSTLTPWNQSRRA. Zn(2+) is bound at residue His117. Glu120 acts as the Proton acceptor in catalysis. A Zn(2+)-binding site is contributed by His121. Glu193 is an active-site residue. Glu230 lines the Zn(2+) pocket.

It belongs to the peptidase M16 family. PreP subfamily. In terms of assembly, monomer and homodimer; homodimerization is induced by binding of the substrate. The cofactor is Zn(2+).

It localises to the mitochondrion intermembrane space. The protein resides in the mitochondrion matrix. Functionally, degrades mitochondrial transit peptides after their cleavage in the intermembrane space or in the matrix, and presequence peptides; clearance of these peptides is required to keep the presequence processing machinery running. Preferentially cleaves the N-terminal side of paired basic amino acid residues. Also degrades other unstructured peptides. May function as an ATP-dependent peptidase as opposed to a metalloendopeptidase. This chain is Presequence protease, mitochondrial (cym1), found in Aspergillus fumigatus (strain ATCC MYA-4609 / CBS 101355 / FGSC A1100 / Af293) (Neosartorya fumigata).